We begin with the raw amino-acid sequence, 835 residues long: Protein translocase subunit SecA (835 aa).

Residues Q85, 103 to 107, and D492 each bind ATP; that span reads GEGKT. Zn(2+) contacts are provided by C819, C821, C830, and C831.

The protein belongs to the SecA family. In terms of assembly, monomer and homodimer. Part of the essential Sec protein translocation apparatus which comprises SecA, SecYEG and auxiliary proteins SecDF. Other proteins may also be involved. Requires Zn(2+) as cofactor.

The protein localises to the cell membrane. Its subcellular location is the cytoplasm. The catalysed reaction is ATP + H2O + cellular proteinSide 1 = ADP + phosphate + cellular proteinSide 2.. Part of the Sec protein translocase complex. Interacts with the SecYEG preprotein conducting channel. Has a central role in coupling the hydrolysis of ATP to the transfer of proteins into and across the cell membrane, serving as an ATP-driven molecular motor driving the stepwise translocation of polypeptide chains across the membrane. The sequence is that of Protein translocase subunit SecA from Clostridium botulinum (strain Loch Maree / Type A3).